The chain runs to 845 residues: Extended synaptotagmin-2 (845 aa).

The segment covering 1-17 (MSSAGGEGPEAGPGRAG) has biased composition (gly residues). The tract at residues 1 to 26 (MSSAGGEGPEAGPGRAGGRSEPEAPG) is disordered. Over 1–27 (MSSAGGEGPEAGPGRAGGRSEPEAPGS) the chain is Cytoplasmic. The chain crosses the membrane as a helical span at residues 28–48 (ALSVDLPGLLGQLARSFALLL). Topologically, residues 49–51 (PVY) are lumenal. A helical membrane pass occupies residues 52 to 72 (ALGYLGLSFSWVLLALGLLAW). Residues 73–845 (CRRSRGLKAS…EDGTRPQVIT (773 aa)) lie on the Cytoplasmic side of the membrane. In terms of domain architecture, SMP-LTD spans 115–294 (DTERAEWLNK…LPNRITVPLV (180 aa)). C2 domains are found at residues 293–413 (LVSE…DEWF) and 442–563 (VLAD…QLSN). Positions 324, 325, 337, 384, 385, 386, 388, 390, and 391 each coordinate Ca(2+). A disordered region spans residues 584–664 (QERPPDYQHS…RDLGRSSSSL (81 aa)). The segment covering 612-628 (SQMSASPGTGGANTAPS) has biased composition (polar residues). Ser615 and Ser617 each carry phosphoserine. Phosphothreonine is present on Thr629. Positions 634-645 (VDDKPAMEEKPQ) are enriched in basic and acidic residues. 7 positions are modified to phosphoserine: Ser660, Ser662, Ser663, Ser667, Ser679, Ser682, and Ser685. The C2 3 domain occupies 710 to 832 (PLGQIQLTIR…ELAKGWTQWY (123 aa)). Residues 757-764 (KRRSGRRK) are required for phosphatidylinositol 4,5-bisphosphate-dependent location at the cell membrane.

This sequence belongs to the extended synaptotagmin family. As to quaternary structure, homodimer. Interacts with ESYT1 and ESYT3. Interacts with FGFR1 that has been activated by FGF1 binding. Interacts with the AP-2 complex; identified in a complex with the AP-2 complex and FGFR1.

Its subcellular location is the cell membrane. It is found in the endoplasmic reticulum membrane. Its function is as follows. Tethers the endoplasmic reticulum to the cell membrane and promotes the formation of appositions between the endoplasmic reticulum and the cell membrane. Binds glycerophospholipids in a barrel-like domain and may play a role in cellular lipid transport. Plays a role in FGF signaling via its role in the rapid internalization of FGFR1 that has been activated by FGF1 binding; this occurs most likely via the AP-2 complex. Promotes the localization of SACM1L at endoplasmic reticulum-plasma membrane contact sites (EPCS). This Mus musculus (Mouse) protein is Extended synaptotagmin-2 (Esyt2).